Here is a 132-residue protein sequence, read N- to C-terminus: DNA-directed RNA polymerase subunit omega (132 aa).

The tract at residues 76-105 (EVDEPEQDAASIAEGQLTSGSQDEDEMPET) is disordered.

The protein belongs to the RNA polymerase subunit omega family. In terms of assembly, the RNAP catalytic core consists of 2 alpha, 1 beta, 1 beta' and 1 omega subunit. When a sigma factor is associated with the core the holoenzyme is formed, which can initiate transcription.

It catalyses the reaction RNA(n) + a ribonucleoside 5'-triphosphate = RNA(n+1) + diphosphate. Its function is as follows. Promotes RNA polymerase assembly. Latches the N- and C-terminal regions of the beta' subunit thereby facilitating its interaction with the beta and alpha subunits. This Allorhizobium ampelinum (strain ATCC BAA-846 / DSM 112012 / S4) (Agrobacterium vitis (strain S4)) protein is DNA-directed RNA polymerase subunit omega.